The primary structure comprises 588 residues: Aspartate--tRNA ligase (588 aa).

Residue Glu177 participates in L-aspartate binding. The aspartate stretch occupies residues 201 to 204 (QLFK). Arg223 contacts L-aspartate. ATP is bound by residues 223-225 (RDE) and Gln232. L-aspartate is bound at residue His451. Glu485 lines the ATP pocket. An L-aspartate-binding site is contributed by Arg492. 537–540 (GLDR) contacts ATP.

It belongs to the class-II aminoacyl-tRNA synthetase family. Type 1 subfamily. As to quaternary structure, homodimer.

The protein localises to the cytoplasm. It carries out the reaction tRNA(Asp) + L-aspartate + ATP = L-aspartyl-tRNA(Asp) + AMP + diphosphate. Functionally, catalyzes the attachment of L-aspartate to tRNA(Asp) in a two-step reaction: L-aspartate is first activated by ATP to form Asp-AMP and then transferred to the acceptor end of tRNA(Asp). The sequence is that of Aspartate--tRNA ligase from Staphylococcus epidermidis (strain ATCC 35984 / DSM 28319 / BCRC 17069 / CCUG 31568 / BM 3577 / RP62A).